Reading from the N-terminus, the 289-residue chain is GTPase Era (289 aa).

Residues 2 to 167 enclose the Era-type G domain; it reads KSGFISLIGR…LDEIYKYLPE (166 aa). Positions 10-17 are G1; it reads GRTNAGKS. 10–17 lines the GTP pocket; sequence GRTNAGKS. The segment at 36–40 is G2; sequence NATRR. Residues 57–60 are G3; it reads DTPG. GTP is bound by residues 57-61 and 116-119; these read DTPGL and TKID. Residues 116-119 form a G4 region; the sequence is TKID. The G5 stretch occupies residues 146–148; the sequence is LSV. One can recognise a KH type-2 domain in the interval 198–274; sequence VSDEVPYSTD…FLKINVKIDK (77 aa).

The protein belongs to the TRAFAC class TrmE-Era-EngA-EngB-Septin-like GTPase superfamily. Era GTPase family. As to quaternary structure, monomer.

The protein localises to the cytoplasm. It is found in the cell inner membrane. Functionally, an essential GTPase that binds both GDP and GTP, with rapid nucleotide exchange. Plays a role in 16S rRNA processing and 30S ribosomal subunit biogenesis and possibly also in cell cycle regulation and energy metabolism. This chain is GTPase Era, found in Campylobacter fetus subsp. fetus (strain 82-40).